The chain runs to 455 residues: Probable pectate lyase 6 (455 aa).

The N-terminal stretch at 1-25 (MVNLGSYVFVFVALSLTVVVPSVQA) is a signal peptide. N-linked (GlcNAc...) asparagine glycans are attached at residues Asn55 and Asn75. Residues Asp247, Asp271, and Asp275 each contribute to the Ca(2+) site. Arg327 is a catalytic residue.

This sequence belongs to the polysaccharide lyase 1 family. Ca(2+) is required as a cofactor.

The catalysed reaction is Eliminative cleavage of (1-&gt;4)-alpha-D-galacturonan to give oligosaccharides with 4-deoxy-alpha-D-galact-4-enuronosyl groups at their non-reducing ends.. It participates in glycan metabolism; pectin degradation; 2-dehydro-3-deoxy-D-gluconate from pectin: step 2/5. The chain is Probable pectate lyase 6 from Arabidopsis thaliana (Mouse-ear cress).